The following is a 96-amino-acid chain: Small ribosomal subunit protein bS6 (96 aa).

Belongs to the bacterial ribosomal protein bS6 family.

Functionally, binds together with bS18 to 16S ribosomal RNA. The sequence is that of Small ribosomal subunit protein bS6 from Streptococcus thermophilus (strain ATCC BAA-491 / LMD-9).